The primary structure comprises 624 residues: Chaperone protein HtpG (624 aa).

The segment at 1-336 is a; substrate-binding; the sequence is MKGQETRGFQ…SSDLPLNVSR (336 aa). The tract at residues 337–552 is b; it reads EILQDSTVTR…ADEMSTQMAK (216 aa). The interval 553-624 is c; the sequence is LFAAAGQKVP…IRRMNQLLVS (72 aa).

It belongs to the heat shock protein 90 family. As to quaternary structure, homodimer.

It localises to the cytoplasm. Its function is as follows. Molecular chaperone. Has ATPase activity. The polypeptide is Chaperone protein HtpG (Escherichia coli O1:K1 / APEC).